The following is a 555-amino-acid chain: Transcriptional adapter 2b (555 aa).

The ZZ-type zinc finger occupies 8–63 (FTKYNCTNCQDDIQGIRVHCAECENFDLCLQCFAAGAEIGAHQNNHSYQFMDTGTS). Zn(2+) contacts are provided by cysteine 13, cysteine 16, cysteine 27, cysteine 30, cysteine 36, cysteine 39, histidine 49, and histidine 53. Residues 69–121 (RGKGAWTAREEIRLLDAIEQYGFGNWEDISKHIETKSAEDAKEEYVNKFVNGT) form the SANT domain. Positions 318–372 (THRSTGPYGHGKTDHTHTSNGSHRPPSSSLHSPQPNLRKVEMSSGGEASSNSIAP) are disordered. Over residues 339–352 (SHRPPSSSLHSPQP) the composition is skewed to low complexity. Residues 363–372 (GEASSNSIAP) are compositionally biased toward polar residues.

As to quaternary structure, component of histone acetyltransferase complexes containing Gcn5 and Ada3. In terms of assembly, can heterooligomerize with Isoform A. Component of the Spt-Ada-Gcn5 acetyltransferase (SAGA) complex consisting of Ada1, Ada2b (Isoform B), Ada3, wda, Saf6, Spt3, Spt7, Spt20, Taf9, Taf10b, Taf12, Nipped-A/Tra1, Sf3b3, Sf3b5, not/nonstop, Sgf11, Sgf29, e(y)2, Atxn7 and Gcn5. Taf5 and Taf10, which has partially redundant properties with Taf10b, may also be part of this complex. Interacts (via C-terminus) with Spt3 and Taf12; the interactions are direct. Interacts with Ada3; the interaction is probably direct. May also interact directly with Spt7 and Gcn5. Interacts with p53. Can heterooligomerize with Isoform B. Component of the Chiffon histone acetyltransferase (CHAT) complex consisting of Ada3, Sgf29, Gcn5, chif/chiffon and Ada2b (Isoform A). Interacts (via N-terminus) with Gcn5 and Ada3; the interaction is direct. Can interact directly with Spt7 in vitro but in vivo this interaction is not stable probably due to the absence of other SAGA components. Interacts with p53. As to expression, expressed in nurse cells of stage 10 egg chambers and transcripts are dumped into the oocyte when nurse cells degenerate at late oogenesis.

The protein resides in the nucleus. Component of several Gcn5-containing histone acetyltransferase complexes that regulate nucleosome organization; involved in acetylation of histone H3, particularly on Lys-10 (H3K9ac) and Lys-15 (H3K14ac). Regulates the transcription of a subset of genes during development; affects recruitment of RNA polymerase II. May be involved in the function of some acidic activation domains, which activate transcription at distant sites. Involved in the p53-dependent apoptosis pathway response to DNA damage by genotoxic agents. Its function is as follows. Component of the SAGA histone acetyltransferase complex, which predominantly acetylates histone H3. In terms of biological role, component of the CHAT histone acetyltransferase complex, which predominantly acetylates histone H3. This is Transcriptional adapter 2b from Drosophila melanogaster (Fruit fly).